We begin with the raw amino-acid sequence, 288 residues long: Xyloglucan endotransglucosylase protein 8 (288 aa).

Residues 1-25 form the signal peptide; the sequence is MAASPYSIFAVQLLLLASWMLSSSS. Residues 26 to 215 enclose the GH16 domain; it reads SNFNQDFNIA…WTQAPFTTSY (190 aa). The active-site Nucleophile is Glu-102. Catalysis depends on Glu-106, which acts as the Proton donor. A xyloglucan-binding site is contributed by Glu-106. Asn-110 carries N-linked (GlcNAc...) asparagine glycosylation. Residues 119–121, 129–131, 194–195, and Gly-199 contribute to the xyloglucan site; these read HTN, ERE, and EW. 2 cysteine pairs are disulfide-bonded: Cys-224/Cys-233 and Cys-268/Cys-282. Arg-273 serves as a coordination point for xyloglucan.

This sequence belongs to the glycosyl hydrolase 16 family. XTH group 2 subfamily. Post-translationally, contains at least one intrachain disulfide bond essential for its enzymatic activity. As to expression, highly expressed in mature fruits. Very low expression in leaves, flowers, calyces and stems.

It is found in the secreted. Its subcellular location is the cell wall. The protein resides in the extracellular space. It localises to the apoplast. The catalysed reaction is breaks a beta-(1-&gt;4) bond in the backbone of a xyloglucan and transfers the xyloglucanyl segment on to O-4 of the non-reducing terminal glucose residue of an acceptor, which can be a xyloglucan or an oligosaccharide of xyloglucan.. Its function is as follows. Catalyzes xyloglucan endotransglycosylation (XET). Cleaves and religates xyloglucan polymers. Does not catalyze xyloglucan endohydrolysis (XEH). Overexpression in Arabidopsis transgenic plants causes accelerated dark-induced leaf senescence and higher lipid peroxidation of the leaf cells. Overexpression in transgenic tomato plants promotes fruit ripening and softening. Probably involved in cell wall restructuring during postharvest fruit softening. The sequence is that of Xyloglucan endotransglucosylase protein 8 from Diospyros kaki (Kaki persimmon).